The following is a 33-amino-acid chain: Cytochrome b6-f complex subunit 6 (33 aa).

A helical membrane pass occupies residues 4 to 24 (ITIISYFGLLLASIIFTLVLF).

This sequence belongs to the PetL family. As to quaternary structure, the 4 large subunits of the cytochrome b6-f complex are cytochrome b6, subunit IV (17 kDa polypeptide, PetD), cytochrome f and the Rieske protein, while the 4 small subunits are PetG, PetL, PetM and PetN. The complex functions as a dimer.

Its subcellular location is the plastid. The protein resides in the chloroplast thylakoid membrane. Component of the cytochrome b6-f complex, which mediates electron transfer between photosystem II (PSII) and photosystem I (PSI), cyclic electron flow around PSI, and state transitions. PetL is important for photoautotrophic growth as well as for electron transfer efficiency and stability of the cytochrome b6-f complex. The chain is Cytochrome b6-f complex subunit 6 from Pinus mugo (Dwarf mountain pine).